The chain runs to 322 residues: Pantothenate kinase (322 aa).

Position 100–107 (100–107 (GSVAVGKS)) interacts with ATP.

It belongs to the prokaryotic pantothenate kinase family.

It is found in the cytoplasm. The enzyme catalyses (R)-pantothenate + ATP = (R)-4'-phosphopantothenate + ADP + H(+). It participates in cofactor biosynthesis; coenzyme A biosynthesis; CoA from (R)-pantothenate: step 1/5. This Brucella canis (strain ATCC 23365 / NCTC 10854 / RM-666) protein is Pantothenate kinase.